The primary structure comprises 33 residues: Brevinin-2PTd (33 aa).

Cys27 and Cys33 are disulfide-bonded.

In terms of tissue distribution, expressed by the skin glands.

The protein localises to the secreted. In terms of biological role, has antibacterial activity against the Gram-positive bacterium S.aureus ATCC 25923 and the Gram-negative bacterium E.coli ATCC 25726. The polypeptide is Brevinin-2PTd (Pulchrana picturata (Malaysian fire frog)).